Consider the following 155-residue polypeptide: Small ribosomal subunit protein uS7 (155 aa).

It belongs to the universal ribosomal protein uS7 family. Part of the 30S ribosomal subunit. Contacts proteins S9 and S11.

Functionally, one of the primary rRNA binding proteins, it binds directly to 16S rRNA where it nucleates assembly of the head domain of the 30S subunit. Is located at the subunit interface close to the decoding center, probably blocks exit of the E-site tRNA. The sequence is that of Small ribosomal subunit protein uS7 from Chlorobium luteolum (strain DSM 273 / BCRC 81028 / 2530) (Pelodictyon luteolum).